The primary structure comprises 134 residues: Small ribosomal subunit protein uS11 (134 aa).

Belongs to the universal ribosomal protein uS11 family. Part of the 30S ribosomal subunit. Interacts with proteins S7 and S18. Binds to IF-3.

Functionally, located on the platform of the 30S subunit, it bridges several disparate RNA helices of the 16S rRNA. Forms part of the Shine-Dalgarno cleft in the 70S ribosome. This is Small ribosomal subunit protein uS11 from Acidovorax ebreus (strain TPSY) (Diaphorobacter sp. (strain TPSY)).